The sequence spans 197 residues: Nascent polypeptide-associated complex subunit alpha (197 aa).

A compositionally biased stretch (acidic residues) spans 1–20 (MAEPVEDSVDEISSEGDSDV). Disordered regions lie at residues 1 to 46 (MAEP…RKLL) and 120 to 154 (GADRGTDSSAAAHASGHDHAHDHDHSHGDCASKAD). The NAC-A/B domain maps to 36 to 101 (DKNERKSRKL…AKVEDMSQNS (66 aa)). The segment covering 134–154 (SGHDHAHDHDHSHGDCASKAD) has biased composition (basic and acidic residues). The UBA domain occupies 158–195 (VNQSDIDLVVSQVGCTREQAVEALIKNKGDIVETIMQL).

The protein belongs to the NAC-alpha family.

In terms of biological role, may promote appropriate targeting of ribosome-nascent polypeptide complexes. The polypeptide is Nascent polypeptide-associated complex subunit alpha (Babesia divergens).